The following is a 323-amino-acid chain: Transcription factor MafB (323 aa).

A Glycyl lysine isopeptide (Lys-Gly) (interchain with G-Cter in SUMO) cross-link involves residue lysine 32. Over residues 34 to 43 (EPLGRAERPG) the composition is skewed to basic and acidic residues. Disordered regions lie at residues 34–78 (EPLG…PTEQ) and 116–210 (PVPQ…VEDR). The segment covering 54-76 (SLSSTPLSTPCSSVPSSPSFSPT) has biased composition (low complexity). Composition is skewed to basic residues over residues 129–143 (GAHHHHHHHHPHPHH) and 159–168 (AHPHHHHHHQ). Residues 192-201 (PHATASATAA) are compositionally biased toward low complexity. The segment at 238–263 (RLKQKRRTLKNRGYAQSCRYKRVQQK) is basic motif. Positions 238–301 (RLKQKRRTLK…DAHKVKCEKL (64 aa)) constitute a bZIP domain. Residues 266–287 (LENEKTQLIQQVEQLKQEVSRL) form a leucine-zipper region. A Glycyl lysine isopeptide (Lys-Gly) (interchain with G-Cter in SUMO) cross-link involves residue lysine 297.

Belongs to the bZIP family. Maf subfamily. Homodimer or heterodimer with other bHLH-Zip transcription factors. Binds DNA as a homodimer or a heterodimer. Forms homodimers and heterodimers with FOS, FOSB and FOSL2, but not with JUN proteins (JUN, JUNB and JUND). Interacts with PAX6; the interaction is direct. Interacts with ETS1 and LRP1. Interacts with the intracellular cytoplasmic domain of LRP1 (LRPICD); the interaction results in a moderate reduction of MAFB transcriptional potential. In terms of processing, sumoylated. Sumoylation on Lys-32 and Lys-297 stimulates its transcriptional repression activity and promotes macrophage differentiation from myeloid progenitors.

The protein resides in the nucleus. In terms of biological role, acts as a transcriptional activator or repressor. Plays a pivotal role in regulating lineage-specific hematopoiesis by repressing ETS1-mediated transcription of erythroid-specific genes in myeloid cells. Required for monocytic, macrophage, osteoclast, podocyte and islet beta cell differentiation. Involved in renal tubule survival and F4/80 maturation. Activates the insulin and glucagon promoters. Together with PAX6, transactivates weakly the glucagon gene promoter through the G1 element. SUMO modification controls its transcriptional activity and ability to specify macrophage fate. Binds element G1 on the glucagon promoter. Involved either as an oncogene or as a tumor suppressor, depending on the cell context. Required for the transcriptional activation of HOXB3 in the rhombomere r5 in the hindbrain. This chain is Transcription factor MafB (MAFB), found in Macaca fascicularis (Crab-eating macaque).